We begin with the raw amino-acid sequence, 293 residues long: Ribosomal protein L11 methyltransferase (293 aa).

4 residues coordinate S-adenosyl-L-methionine: T145, G166, D188, and N230.

Belongs to the methyltransferase superfamily. PrmA family.

The protein localises to the cytoplasm. It catalyses the reaction L-lysyl-[protein] + 3 S-adenosyl-L-methionine = N(6),N(6),N(6)-trimethyl-L-lysyl-[protein] + 3 S-adenosyl-L-homocysteine + 3 H(+). Its function is as follows. Methylates ribosomal protein L11. The chain is Ribosomal protein L11 methyltransferase from Klebsiella pneumoniae (strain 342).